Reading from the N-terminus, the 84-residue chain is Cell division topological specificity factor (84 aa).

Belongs to the MinE family.

Its function is as follows. Prevents the cell division inhibition by proteins MinC and MinD at internal division sites while permitting inhibition at polar sites. This ensures cell division at the proper site by restricting the formation of a division septum at the midpoint of the long axis of the cell. The protein is Cell division topological specificity factor of Pseudomonas fluorescens (strain ATCC BAA-477 / NRRL B-23932 / Pf-5).